The following is a 167-amino-acid chain: uncharacterized protein (167 aa).

The protein resides in the mitochondrion. This is an uncharacterized protein from Ascobolus immersus.